Here is a 195-residue protein sequence, read N- to C-terminus: Glycerol-3-phosphate acyltransferase (195 aa).

Helical transmembrane passes span 7 to 27 (IFIL…SYVI), 52 to 72 (LALL…AIAQ), 80 to 100 (ILFL…YLFF), 113 to 133 (LIFI…ICFL), and 147 to 167 (LIAL…IFTI).

Belongs to the PlsY family. As to quaternary structure, probably interacts with PlsX.

It is found in the cell inner membrane. The catalysed reaction is an acyl phosphate + sn-glycerol 3-phosphate = a 1-acyl-sn-glycero-3-phosphate + phosphate. It participates in lipid metabolism; phospholipid metabolism. In terms of biological role, catalyzes the transfer of an acyl group from acyl-phosphate (acyl-PO(4)) to glycerol-3-phosphate (G3P) to form lysophosphatidic acid (LPA). This enzyme utilizes acyl-phosphate as fatty acyl donor, but not acyl-CoA or acyl-ACP. This chain is Glycerol-3-phosphate acyltransferase, found in Ehrlichia ruminantium (strain Welgevonden).